The sequence spans 60 residues: UPF0337 protein SSP1134 (60 aa).

The segment at 1-41 is disordered; sequence MADENKFEQAKGNVKETVGNVTDNKELENEGKEDKTSGKAK. Residues 23–41 are compositionally biased toward basic and acidic residues; it reads DNKELENEGKEDKTSGKAK.

The protein belongs to the UPF0337 (CsbD) family.

This Staphylococcus saprophyticus subsp. saprophyticus (strain ATCC 15305 / DSM 20229 / NCIMB 8711 / NCTC 7292 / S-41) protein is UPF0337 protein SSP1134.